The sequence spans 626 residues: Endogenous retrovirus group S71 member 1 Env polyprotein (626 aa).

Residues 1–38 form the signal peptide; that stretch reads MGPEAWVRPLKTAPKPGEAIRLILFIYLSCFFLPVMSS. Positions 39–438 are surface protein; sequence EPSYSFLLTS…PPELHPRLHQ (400 aa). At 39–575 the chain is on the extracellular side; the sequence is EPSYSFLLTS…FNWNPWLTTL (537 aa). The CXXC motif lies at 302–305; sequence CWLC. The interval 439–459 is fusion peptide; sequence AVPLLVPLLAGLSIAGSAAIG. Residues 439 to 626 are transmembrane protein; it reads AVPLLVPLLA…KTQYDTLVNN (188 aa). Residues 503–519 carry the CKS-17 motif; it reads LQNCRCLDLLFLSQGGL. A disulfide bridge links cysteine 520 with cysteine 527. Positions 520–528 match the CX6CC motif; the sequence is CAALGESCC. A helical transmembrane segment spans residues 576-596; that stretch reads ITGLAGPLLILLLSLIFGPCI. The Cytoplasmic segment spans residues 597-626; it reads LNSFLNFIKQRIASVKLTYLKTQYDTLVNN.

It belongs to the gamma type-C retroviral envelope protein family. HERV class-I T env subfamily. Post-translationally, the CXXC motif is highly conserved across a broad range of retroviral envelope proteins. It is thought to participate in the formation of a labile disulfide bond possibly with the CX6CC motif present in the transmembrane domain. In terms of tissue distribution, expressed at higher level in thyroid. Expressed at lower level in adrenal, bone marrow, brain, breast, kidney, ovary, placenta, prostate, skin, testis and trachea.

Its subcellular location is the cell membrane. Its function is as follows. Retroviral envelope proteins mediate receptor recognition and membrane fusion during early infection. Endogenous envelope proteins may have kept, lost or modified their original function during evolution. This endogenous envelope protein has lost its original fusogenic properties. This chain is Endogenous retrovirus group S71 member 1 Env polyprotein (ERVS71-1), found in Homo sapiens (Human).